A 331-amino-acid polypeptide reads, in one-letter code: NADH-cytochrome b5 reductase 2 (331 aa).

Residues 36–56 (VGILIASAVGMAGFGTYFMFG) traverse the membrane as a helical segment. One can recognise an FAD-binding FR-type domain in the interval 80–185 (KGFVSLQLDD…KGPLPKYEWS (106 aa)). 188–223 (KHPHVAMIAGGTGITPMYQIMRAIFKNPADKTKVTL) serves as a coordination point for FAD.

It belongs to the flavoprotein pyridine nucleotide cytochrome reductase family. FAD is required as a cofactor.

It is found in the mitochondrion outer membrane. The catalysed reaction is 2 Fe(III)-[cytochrome b5] + NADH = 2 Fe(II)-[cytochrome b5] + NAD(+) + H(+). May mediate the reduction of outer membrane cytochrome b5. In Pyricularia oryzae (strain 70-15 / ATCC MYA-4617 / FGSC 8958) (Rice blast fungus), this protein is NADH-cytochrome b5 reductase 2 (MCR1).